The chain runs to 110 residues: Flagellar hook-basal body complex protein FliE (110 aa).

It belongs to the FliE family.

Its subcellular location is the bacterial flagellum basal body. The polypeptide is Flagellar hook-basal body complex protein FliE (Ralstonia nicotianae (strain ATCC BAA-1114 / GMI1000) (Ralstonia solanacearum)).